The sequence spans 576 residues: Putative export ATP-binding/permease protein RP696 (576 aa).

Positions 20–303 constitute an ABC transmembrane type-1 domain; it reads LIIVMISLLS…IFELLSEMHL (284 aa). 6 consecutive transmembrane segments (helical) span residues 21 to 41, 61 to 81, 135 to 155, 158 to 178, 242 to 262, and 277 to 297; these read IIVM…GSIF, ILYI…RSYF, FLSF…LMFF, FKLA…LIKF, ALFF…IVWI, and IISF…IFEL. One can recognise an ABC transporter domain in the interval 336 to 572; the sequence is IEFKNVDFTY…SEIYRNICRE (237 aa). 371–378 is a binding site for ATP; that stretch reads GRSGAGKS.

Belongs to the ABC transporter superfamily. Homodimer.

Its subcellular location is the cell inner membrane. Functionally, part of an ABC transporter complex. Transmembrane domains (TMD) form a pore in the inner membrane and the ATP-binding domain (NBD) is responsible for energy generation. This Rickettsia prowazekii (strain Madrid E) protein is Putative export ATP-binding/permease protein RP696.